Reading from the N-terminus, the 168-residue chain is Photosystem I assembly protein Ycf3 (168 aa).

TPR repeat units follow at residues 35-68 (AFTY…EIDP), 72-105 (SYIL…NPFL), and 120-153 (GEQA…TPGN).

Belongs to the Ycf3 family.

The protein resides in the plastid. The protein localises to the chloroplast thylakoid membrane. In terms of biological role, essential for the assembly of the photosystem I (PSI) complex. May act as a chaperone-like factor to guide the assembly of the PSI subunits. The sequence is that of Photosystem I assembly protein Ycf3 from Daucus carota (Wild carrot).